A 210-amino-acid polypeptide reads, in one-letter code: Large ribosomal subunit protein uL3 (210 aa).

The segment at 139-165 (AEKVHRSPGSIGHATFPGKVFKGKKMP) is disordered.

This sequence belongs to the universal ribosomal protein uL3 family. In terms of assembly, part of the 50S ribosomal subunit. Forms a cluster with proteins L14 and L19.

In terms of biological role, one of the primary rRNA binding proteins, it binds directly near the 3'-end of the 23S rRNA, where it nucleates assembly of the 50S subunit. The chain is Large ribosomal subunit protein uL3 from Maridesulfovibrio salexigens (strain ATCC 14822 / DSM 2638 / NCIMB 8403 / VKM B-1763) (Desulfovibrio salexigens).